A 447-amino-acid polypeptide reads, in one-letter code: Serine/threonine-protein phosphatase 2A 55 kDa regulatory subunit B alpha isoform (447 aa).

N-acetylalanine is present on A2. WD repeat units follow at residues 11–80 (QWCF…FQSH), 94–174 (EKIN…IFAN), 175–218 (AHTY…VDIK), 227–270 (EVIT…KLFE), 288–325 (ISDV…TYQV), 347–381 (ECCW…TLEA), and 414–446 (DFNK…QDKV).

This sequence belongs to the phosphatase 2A regulatory subunit B family. As to quaternary structure, PP2A consists of a common heterodimeric core enzyme, composed of a 36 kDa catalytic subunit (subunit C) and a 65 kDa constant regulatory subunit (PR65 or subunit A), that associates with a variety of regulatory subunits. Proteins that associate with the core dimer include three families of regulatory subunits B (the R2/B/PR55/B55, R3/B''/PR72/PR130/PR59 and R5/B'/B56 families), the 48 kDa variable regulatory subunit, viral proteins, and cell signaling molecules. Interacts with the PP2A C catalytic subunit PPP2CA. Interacts with the PP2A A subunit PPP2R1A. Found in a complex with at least ARL2, PPP2CB, PPP2R1A, PPP2R2A, PPP2R5E and TBCD. Interacts with MFHAS1; the interaction is direct. Interacts with PABIR1/FAM122A (via its N-terminus); the interaction is direct and inhibits PP2A activity. Interacts with ARPP19; the interaction is direct and inhibits PP2A activity. Interacts with CRTC3. In terms of tissue distribution, brain.

Its function is as follows. Substrate-recognition subunit of protein phosphatase 2A (PP2A) that plays a key role in cell cycle by controlling mitosis entry and exit. Involved in chromosome clustering during late mitosis by mediating dephosphorylation of MKI67. Essential for serine/threonine-protein phosphatase 2A-mediated dephosphorylation of WEE1, preventing its ubiquitin-mediated proteolysis, increasing WEE1 protein levels, and promoting the G2/M checkpoint. In Rattus norvegicus (Rat), this protein is Serine/threonine-protein phosphatase 2A 55 kDa regulatory subunit B alpha isoform (Ppp2r2a).